A 37-amino-acid polypeptide reads, in one-letter code: Large ribosomal subunit protein bL36 (37 aa).

This sequence belongs to the bacterial ribosomal protein bL36 family.

This is Large ribosomal subunit protein bL36 from Methylibium petroleiphilum (strain ATCC BAA-1232 / LMG 22953 / PM1).